The following is a 157-amino-acid chain: 2-C-methyl-D-erythritol 2,4-cyclodiphosphate synthase (157 aa).

2 residues coordinate a divalent metal cation: D8 and H10. 4-CDP-2-C-methyl-D-erythritol 2-phosphate is bound by residues 8-10 (DVH) and 34-35 (HS). A divalent metal cation is bound at residue H42. Residues 56-58 (DIG), 61-65 (FPDTD), 100-106 (AQAPKMA), 132-135 (TTTE), F139, and R142 contribute to the 4-CDP-2-C-methyl-D-erythritol 2-phosphate site.

It belongs to the IspF family. As to quaternary structure, homotrimer. A divalent metal cation serves as cofactor.

It catalyses the reaction 4-CDP-2-C-methyl-D-erythritol 2-phosphate = 2-C-methyl-D-erythritol 2,4-cyclic diphosphate + CMP. Its pathway is isoprenoid biosynthesis; isopentenyl diphosphate biosynthesis via DXP pathway; isopentenyl diphosphate from 1-deoxy-D-xylulose 5-phosphate: step 4/6. Its function is as follows. Involved in the biosynthesis of isopentenyl diphosphate (IPP) and dimethylallyl diphosphate (DMAPP), two major building blocks of isoprenoid compounds. Catalyzes the conversion of 4-diphosphocytidyl-2-C-methyl-D-erythritol 2-phosphate (CDP-ME2P) to 2-C-methyl-D-erythritol 2,4-cyclodiphosphate (ME-CPP) with a corresponding release of cytidine 5-monophosphate (CMP). This chain is 2-C-methyl-D-erythritol 2,4-cyclodiphosphate synthase, found in Pseudomonas paraeruginosa (strain DSM 24068 / PA7) (Pseudomonas aeruginosa (strain PA7)).